A 375-amino-acid polypeptide reads, in one-letter code: Filamin-binding LIM protein 1 (375 aa).

The filamin-binding stretch occupies residues 1–70 (MASKPEKRVA…SPWTPPGRAA (70 aa)). Disordered stretches follow at residues 43–119 (WEAP…PSEE) and 137–176 (HLSP…AERV). 2 stretches are compositionally biased toward pro residues: residues 104 to 114 (FPPPPPPPPVL) and 140 to 149 (PPLPPPPPQA). Residues 150-159 (PAERPSVQPS) are compositionally biased toward low complexity. LIM zinc-binding domains lie at 183–244 (DICA…TLER), 245–302 (CGKC…RKFA), and 303–372 (PVCS…RSAA). The tract at residues 278 to 375 (IGDESFALGS…HVKRSAAGCC (98 aa)) is FERMT2-binding.

As to quaternary structure, interacts with FERMT2, FLNA, FLNB and FLNC. Interacts with NKX2-5.

The protein resides in the cell junction. The protein localises to the focal adhesion. Its subcellular location is the cytoplasm. It localises to the cytoskeleton. It is found in the stress fiber. Functionally, serves as an anchoring site for cell-ECM adhesion proteins and filamin-containing actin filaments. Is implicated in cell shape modulation (spreading) and motility. May participate in the regulation of filamin-mediated cross-linking and stabilization of actin filaments. May also regulate the assembly of filamin-containing signaling complexes that control actin assembly. Promotes dissociation of FLNA from ITGB3 and ITGB7. Promotes activation of integrins and regulates integrin-mediated cell-cell adhesion. In Pongo abelii (Sumatran orangutan), this protein is Filamin-binding LIM protein 1 (FBLIM1).